Consider the following 255-residue polypeptide: Triosephosphate isomerase (255 aa).

Position 10–12 (10–12 (NWK)) interacts with substrate. Histidine 96 functions as the Electrophile in the catalytic mechanism. Catalysis depends on glutamate 168, which acts as the Proton acceptor. Residues glycine 174, serine 213, and 234–235 (GG) contribute to the substrate site.

Belongs to the triosephosphate isomerase family. As to quaternary structure, homodimer.

The protein localises to the cytoplasm. It catalyses the reaction D-glyceraldehyde 3-phosphate = dihydroxyacetone phosphate. The protein operates within carbohydrate biosynthesis; gluconeogenesis. It participates in carbohydrate degradation; glycolysis; D-glyceraldehyde 3-phosphate from glycerone phosphate: step 1/1. In terms of biological role, involved in the gluconeogenesis. Catalyzes stereospecifically the conversion of dihydroxyacetone phosphate (DHAP) to D-glyceraldehyde-3-phosphate (G3P). This chain is Triosephosphate isomerase, found in Histophilus somni (strain 2336) (Haemophilus somnus).